Here is a 76-residue protein sequence, read N- to C-terminus: MARFFRRRKFCRFTAEGVKEIDYKDLDTLKGYITETGKIVPSRITGTKARYQRQLATAIKRARYLALLPYTDGHDH.

Belongs to the bacterial ribosomal protein bS18 family. Part of the 30S ribosomal subunit. Forms a tight heterodimer with protein bS6.

Binds as a heterodimer with protein bS6 to the central domain of the 16S rRNA, where it helps stabilize the platform of the 30S subunit. The chain is Small ribosomal subunit protein bS18 from Marinobacter nauticus (strain ATCC 700491 / DSM 11845 / VT8) (Marinobacter aquaeolei).